Here is a 612-residue protein sequence, read N- to C-terminus: MACPF domain-containing protein NSL1 (612 aa).

The MACPF domain maps to 5–338; that stretch reads NFTRLDAHSA…PPIEELHQFL (334 aa).

The protein belongs to the complement C6/C7/C8/C9 (TC 1.C.39) family.

In terms of biological role, negatively controls the salicylic acid (SA)-mediated pathway of programmed cell death in plant immunity. The protein is MACPF domain-containing protein NSL1 (NSL1) of Arabidopsis thaliana (Mouse-ear cress).